A 203-amino-acid polypeptide reads, in one-letter code: A-type ATP synthase subunit E (203 aa).

It belongs to the V-ATPase E subunit family. Has multiple subunits with at least A(3), B(3), C, D, E, F, H, I and proteolipid K(x).

It is found in the cell membrane. Functionally, component of the A-type ATP synthase that produces ATP from ADP in the presence of a proton gradient across the membrane. The sequence is that of A-type ATP synthase subunit E from Desulfurococcus sp. (strain SY).